Here is a 122-residue protein sequence, read N- to C-terminus: Succinate dehydrogenase assembly factor 3, mitochondrial (122 aa).

The N-terminal 47 residues, 1–47 (MHPSVVRLVKPRRPERITSPILPPLPLYRAILRAHHRKLPQELRYLG), are a transit peptide targeting the mitochondrion.

Belongs to the complex I LYR family. SDHAF3 subfamily. As to quaternary structure, interacts with the iron-sulfur protein subunit within the SDH catalytic dimer.

It is found in the mitochondrion matrix. Plays an essential role in the assembly of succinate dehydrogenase (SDH), an enzyme complex (also referred to as respiratory complex II) that is a component of both the tricarboxylic acid (TCA) cycle and the mitochondrial electron transport chain, and which couples the oxidation of succinate to fumarate with the reduction of ubiquinone (coenzyme Q) to ubiquinol. Promotes maturation of the iron-sulfur protein subunit of the SDH catalytic dimer, protecting it from the deleterious effects of oxidants. May act together with SDHAF1. This chain is Succinate dehydrogenase assembly factor 3, mitochondrial, found in Candida albicans (strain SC5314 / ATCC MYA-2876) (Yeast).